The following is a 228-amino-acid chain: L-ribulose-5-phosphate 4-epimerase UlaF (228 aa).

Residues 26–27 (GN), 43–44 (SG), and 72–73 (SS) contribute to the substrate site. Zn(2+) contacts are provided by aspartate 74, histidine 93, and histidine 95. Aspartate 118 functions as the Proton donor/acceptor in the catalytic mechanism. Histidine 167 contacts Zn(2+). Tyrosine 225 functions as the Proton donor/acceptor in the catalytic mechanism.

The protein belongs to the aldolase class II family. AraD/FucA subfamily. Zn(2+) is required as a cofactor.

It catalyses the reaction L-ribulose 5-phosphate = D-xylulose 5-phosphate. It functions in the pathway cofactor degradation; L-ascorbate degradation; D-xylulose 5-phosphate from L-ascorbate: step 4/4. In terms of biological role, catalyzes the isomerization of L-ribulose 5-phosphate to D-xylulose 5-phosphate. Is involved in the anaerobic L-ascorbate utilization. The sequence is that of L-ribulose-5-phosphate 4-epimerase UlaF from Escherichia coli O45:K1 (strain S88 / ExPEC).